The sequence spans 109 residues: uncharacterized protein (109 aa).

A helical transmembrane segment spans residues 75–95 (LHFFFLFWLLNFILFFRIHLY).

The protein resides in the membrane. This is an uncharacterized protein from Schizosaccharomyces pombe (strain 972 / ATCC 24843) (Fission yeast).